The sequence spans 428 residues: CRS2-associated factor 1, mitochondrial (428 aa).

The N-terminal 21 residues, 1–21 (MLLLAGLLRRARPPRRPSVRR), are a transit peptide targeting the mitochondrion. Disordered regions lie at residues 33 to 100 (PPAS…REPK) and 129 to 152 (HADD…RERV). 2 CRM domains span residues 155–253 (EPLT…KRPV) and 275–371 (EGLT…IQDN). The segment at 378 to 428 (SVLEEESAGAESENGDQEQASSDWASDECSQLSSSDEMPDDKSAISEADSD) is disordered. Positions 380–393 (LEEESAGAESENGD) are enriched in acidic residues. The span at 394-413 (QEQASSDWASDECSQLSSSD) shows a compositional bias: polar residues.

Part of large ribonucleo-protein complexes that include group IIB introns.

It is found in the mitochondrion. Its function is as follows. May be involved in the splicing of group IIB introns in mitochondria. This Oryza sativa subsp. japonica (Rice) protein is CRS2-associated factor 1, mitochondrial.